Consider the following 113-residue polypeptide: UPF0122 protein LSEI_1603 (113 aa).

It belongs to the UPF0122 family.

Might take part in the signal recognition particle (SRP) pathway. This is inferred from the conservation of its genetic proximity to ftsY/ffh. May be a regulatory protein. The polypeptide is UPF0122 protein LSEI_1603 (Lacticaseibacillus paracasei (strain ATCC 334 / BCRC 17002 / CCUG 31169 / CIP 107868 / KCTC 3260 / NRRL B-441) (Lactobacillus paracasei)).